The sequence spans 392 residues: Formate-dependent phosphoribosylglycinamide formyltransferase (392 aa).

Residues 22–23 (EL) and Glu82 contribute to the N(1)-(5-phospho-beta-D-ribosyl)glycinamide site. ATP contacts are provided by residues Arg114, Lys155, 160-165 (SSGKGQ), 195-198 (EGVV), and Glu203. Positions 119 to 308 (RLAAEELQLP…EFALHVRAFL (190 aa)) constitute an ATP-grasp domain. Residues Glu267 and Glu279 each contribute to the Mg(2+) site. N(1)-(5-phospho-beta-D-ribosyl)glycinamide is bound by residues Asp286, Lys355, and 362–363 (RR).

Belongs to the PurK/PurT family. As to quaternary structure, homodimer.

It catalyses the reaction N(1)-(5-phospho-beta-D-ribosyl)glycinamide + formate + ATP = N(2)-formyl-N(1)-(5-phospho-beta-D-ribosyl)glycinamide + ADP + phosphate + H(+). It participates in purine metabolism; IMP biosynthesis via de novo pathway; N(2)-formyl-N(1)-(5-phospho-D-ribosyl)glycinamide from N(1)-(5-phospho-D-ribosyl)glycinamide (formate route): step 1/1. Its function is as follows. Involved in the de novo purine biosynthesis. Catalyzes the transfer of formate to 5-phospho-ribosyl-glycinamide (GAR), producing 5-phospho-ribosyl-N-formylglycinamide (FGAR). Formate is provided by PurU via hydrolysis of 10-formyl-tetrahydrofolate. This is Formate-dependent phosphoribosylglycinamide formyltransferase from Shigella flexneri.